A 393-amino-acid polypeptide reads, in one-letter code: S-adenosylmethionine synthase (393 aa).

E9 provides a ligand contact to Mg(2+). H15 provides a ligand contact to ATP. E43 is a K(+) binding site. E56 and Q99 together coordinate L-methionine. ATP contacts are provided by residues 167-169 (DGK), 235-238 (SGRF), D246, 252-253 (RK), A269, K273, and K277. An L-methionine-binding site is contributed by D246. Residue K277 participates in L-methionine binding.

This sequence belongs to the AdoMet synthase family. As to quaternary structure, homotetramer. Mn(2+) serves as cofactor. Requires Mg(2+) as cofactor. The cofactor is Co(2+). It depends on K(+) as a cofactor.

The protein resides in the cytoplasm. It carries out the reaction L-methionine + ATP + H2O = S-adenosyl-L-methionine + phosphate + diphosphate. The protein operates within amino-acid biosynthesis; S-adenosyl-L-methionine biosynthesis; S-adenosyl-L-methionine from L-methionine: step 1/1. Its function is as follows. Catalyzes the formation of S-adenosylmethionine from methionine and ATP. The reaction comprises two steps that are both catalyzed by the same enzyme: formation of S-adenosylmethionine (AdoMet) and triphosphate, and subsequent hydrolysis of the triphosphate. This is S-adenosylmethionine synthase (SAMS) from Solanum palustre (Non-tuber-performing potato).